Reading from the N-terminus, the 272-residue chain is 3-methyl-2-oxobutanoate hydroxymethyltransferase (272 aa).

Mg(2+) contacts are provided by Asp-54 and Asp-93. 3-methyl-2-oxobutanoate-binding positions include 54–55 (DS), Asp-93, and Lys-121. Mg(2+) is bound at residue Glu-123. The Proton acceptor role is filled by Glu-190.

The protein belongs to the PanB family. Homodecamer; pentamer of dimers. It depends on Mg(2+) as a cofactor.

The protein localises to the cytoplasm. It carries out the reaction 3-methyl-2-oxobutanoate + (6R)-5,10-methylene-5,6,7,8-tetrahydrofolate + H2O = 2-dehydropantoate + (6S)-5,6,7,8-tetrahydrofolate. Its pathway is cofactor biosynthesis; (R)-pantothenate biosynthesis; (R)-pantoate from 3-methyl-2-oxobutanoate: step 1/2. Its function is as follows. Catalyzes the reversible reaction in which hydroxymethyl group from 5,10-methylenetetrahydrofolate is transferred onto alpha-ketoisovalerate to form ketopantoate. The protein is 3-methyl-2-oxobutanoate hydroxymethyltransferase of Janthinobacterium sp. (strain Marseille) (Minibacterium massiliensis).